Reading from the N-terminus, the 434-residue chain is MAHMDFPFYTPKDAFPVGGAVRDLLLGRRPTDLDYAALDPEKAAEEAKRRLGGSLFPLDPKRGHYRLVVGERTLDFTPLEGRLEEDLLRRDYRVNALLWKGGAVFGLKGVEEDLRRRLLVPVREENLYQDHLRSLRGVRLAATLGFGLPRRTREALGRHARFLQAHPEALPARERVKEELARLLLSPRAAFGLRLLERVGLLGVYLPELALLVGLHQGGVHHLPAWEHTLSAVFHLLWLWPEAPLEARLAALFHDVGKPLTRRFDPEVGRFRFLGHAEVGAEIARASLFWLRFPKEVVERVAGLVRRHMDRLPEERKALRRFFLRRQDLLPDLVYLMAADRLATRGVEREAWEVLGRYEEVLKDPLPQRPLLSGEEVMALLGLQEGPEVGRALKALLEAQAEGRVGTKEEARAFLLYWRGGREAQASGTPDHPH.

19 to 22 contributes to the CTP binding site; the sequence is GAVR. The Mg(2+) site is built by Asp32 and Asp34. CTP-binding positions include 90–91, Asn95, 130–139, and Arg175; these read RD and DHLRSLRGVR.

Belongs to the tRNA nucleotidyltransferase/poly(A) polymerase family. It depends on Mg(2+) as a cofactor.

It carries out the reaction a tRNA precursor + 2 CTP = a tRNA with a 3' CC end + 2 diphosphate. TRNA nucleotidyltransferase involved in the synthesis of the tRNA CCA terminus. Adds the two cytidine residues to tRNA. This Thermus thermophilus (strain ATCC BAA-163 / DSM 7039 / HB27) protein is CC-adding tRNA nucleotidyltransferase.